The primary structure comprises 292 residues: NAD kinase (292 aa).

Catalysis depends on Asp73, which acts as the Proton acceptor. NAD(+) contacts are provided by residues 73–74, 147–148, His158, Arg175, Asp177, 188–193, and Gln247; these read DG, NE, and TAYSLS.

This sequence belongs to the NAD kinase family. Requires a divalent metal cation as cofactor.

The protein localises to the cytoplasm. It carries out the reaction NAD(+) + ATP = ADP + NADP(+) + H(+). In terms of biological role, involved in the regulation of the intracellular balance of NAD and NADP, and is a key enzyme in the biosynthesis of NADP. Catalyzes specifically the phosphorylation on 2'-hydroxyl of the adenosine moiety of NAD to yield NADP. The sequence is that of NAD kinase from Photorhabdus laumondii subsp. laumondii (strain DSM 15139 / CIP 105565 / TT01) (Photorhabdus luminescens subsp. laumondii).